A 67-amino-acid polypeptide reads, in one-letter code: Large ribosomal subunit protein uL29 (67 aa).

It belongs to the universal ribosomal protein uL29 family.

This is Large ribosomal subunit protein uL29 from Wolbachia pipientis wMel.